We begin with the raw amino-acid sequence, 291 residues long: Proteasome subunit beta (291 aa).

A propeptide spans 1-56 (removed in mature form; by autocatalysis); the sequence is MTRSFPDRLPTNLAFPGISVINQSSFVDLLRRQAPELLPVSLGGGQSGGGQQLSHG. Thr57 functions as the Nucleophile in the catalytic mechanism.

The protein belongs to the peptidase T1B family. As to quaternary structure, the 20S proteasome core is composed of 14 alpha and 14 beta subunits that assemble into four stacked heptameric rings, resulting in a barrel-shaped structure. The two inner rings, each composed of seven catalytic beta subunits, are sandwiched by two outer rings, each composed of seven alpha subunits. The catalytic chamber with the active sites is on the inside of the barrel. Has a gated structure, the ends of the cylinder being occluded by the N-termini of the alpha-subunits. Is capped by the proteasome-associated ATPase, ARC.

The protein localises to the cytoplasm. The enzyme catalyses Cleavage of peptide bonds with very broad specificity.. Its pathway is protein degradation; proteasomal Pup-dependent pathway. Its activity is regulated as follows. The formation of the proteasomal ATPase ARC-20S proteasome complex, likely via the docking of the C-termini of ARC into the intersubunit pockets in the alpha-rings, may trigger opening of the gate for substrate entry. Interconversion between the open-gate and close-gate conformations leads to a dynamic regulation of the 20S proteasome proteolysis activity. In terms of biological role, component of the proteasome core, a large protease complex with broad specificity involved in protein degradation. This chain is Proteasome subunit beta, found in Mycobacterium leprae (strain Br4923).